Reading from the N-terminus, the 140-residue chain is Transcription antitermination protein NusB (140 aa).

The protein belongs to the NusB family.

Its function is as follows. Involved in transcription antitermination. Required for transcription of ribosomal RNA (rRNA) genes. Binds specifically to the boxA antiterminator sequence of the ribosomal RNA (rrn) operons. The chain is Transcription antitermination protein NusB from Pseudoalteromonas atlantica (strain T6c / ATCC BAA-1087).